Reading from the N-terminus, the 30-residue chain is Cysteine-rich venom protein annuliferin-a (30 aa).

The protein belongs to the CRISP family. In terms of processing, contains 8 disulfide bonds. As to expression, expressed by the venom gland.

The protein resides in the secreted. Functionally, inhibits calcium-activated potassium channels (KCa), voltage-gated potassium channel (Kv), and the calcium release channel/ryanodine receptor (RyR). This Naja annulifera (Banded Egyptian cobra) protein is Cysteine-rich venom protein annuliferin-a.